The chain runs to 492 residues: Glutamyl-tRNA(Gln) amidotransferase subunit A (492 aa).

Residues lysine 78 and serine 158 each act as charge relay system in the active site. The active-site Acyl-ester intermediate is serine 182.

It belongs to the amidase family. GatA subfamily. In terms of assembly, heterotrimer of A, B and C subunits.

It carries out the reaction L-glutamyl-tRNA(Gln) + L-glutamine + ATP + H2O = L-glutaminyl-tRNA(Gln) + L-glutamate + ADP + phosphate + H(+). Allows the formation of correctly charged Gln-tRNA(Gln) through the transamidation of misacylated Glu-tRNA(Gln) in organisms which lack glutaminyl-tRNA synthetase. The reaction takes place in the presence of glutamine and ATP through an activated gamma-phospho-Glu-tRNA(Gln). This chain is Glutamyl-tRNA(Gln) amidotransferase subunit A, found in Rhodopseudomonas palustris (strain BisB18).